Here is a 78-residue protein sequence, read N- to C-terminus: MRLILCLPVLVVVLLMVLEGPAPAQGAPAIASTFRNIPNSLKEFGNNLKDAFESIPEATQKLMTSFAEGLKNFRIPMV.

An N-terminal signal peptide occupies residues 1–26; the sequence is MRLILCLPVLVVVLLMVLEGPAPAQG.

This sequence belongs to the apolipoprotein C1 family.

It localises to the secreted. Its function is as follows. Inhibitor of lipoprotein binding to the low density lipoprotein (LDL) receptor, LDL receptor-related protein, and very low density lipoprotein (VLDL) receptor. Associates with high density lipoproteins (HDL) and the triacylglycerol-rich lipoproteins in the plasma and makes up about 10% of the protein of the VLDL and 2% of that of HDL. Appears to interfere directly with fatty acid uptake and is also the major plasma inhibitor of cholesteryl ester transfer protein (CETP). Binds free fatty acids and reduces their intracellular esterification. Modulates the interaction of APOE with beta-migrating VLDL and inhibits binding of beta-VLDL to the LDL receptor-related protein. The sequence is that of Apolipoprotein C-I (APOC1) from Acinonyx jubatus (Cheetah).